The chain runs to 357 residues: MNHELRSVIDAINPVDQSLMAAAQAHLDNLTKPRGSLGRLEELAARLYCIAGGRRPLRVDPARVFTVAGDHGVSAEGVSPFPQEVTRQMVLNFANGGAGINVLCRTAGVDLRVVDAGCLGGPFPEHPALIQRKVAEGTASIARGPAMSLETCEKALLLGISLAEEAAADGCRCVGTGDMGISNTTPSTALYCAYLGLDPADITGPGAGLAGEAVRHKVEVIRRALEVNRHIVEAGDPVATLAALGGIEIATLAGLVIGAARHGLACVIDGFISTAAFTAAWKICPDVRGYCFLSHASAEPGYRSVVDALNAQPLLHLGLRLGEGTGGALAMFLMRAAADIFNDMATFADAGVSEADD.

Glu-323 (proton acceptor) is an active-site residue.

It belongs to the CobT family.

The enzyme catalyses 5,6-dimethylbenzimidazole + nicotinate beta-D-ribonucleotide = alpha-ribazole 5'-phosphate + nicotinate + H(+). The protein operates within nucleoside biosynthesis; alpha-ribazole biosynthesis; alpha-ribazole from 5,6-dimethylbenzimidazole: step 1/2. Functionally, catalyzes the synthesis of alpha-ribazole-5'-phosphate from nicotinate mononucleotide (NAMN) and 5,6-dimethylbenzimidazole (DMB). In Nitratidesulfovibrio vulgaris (strain ATCC 29579 / DSM 644 / CCUG 34227 / NCIMB 8303 / VKM B-1760 / Hildenborough) (Desulfovibrio vulgaris), this protein is Nicotinate-nucleotide--dimethylbenzimidazole phosphoribosyltransferase.